The chain runs to 701 residues: Protein UL29/UL28 (701 aa).

The interval 1–33 (MSGRRKGCSAATASSSSSSPPSRLPPLPGHARR) is disordered.

This sequence belongs to the herpesviridae US22 family. Interacts with UL38 and host HDAC1; these interactions are necessary for the HDAC1 interaction with UL38. Interacts with host MTA2.

Its subcellular location is the virion. It localises to the host nucleus. The protein localises to the host cytoplasm. Its function is as follows. Contributes to activation of immediate-early gene expression. The chain is Protein UL29/UL28 (UL29) from Homo sapiens (Human).